Consider the following 318-residue polypeptide: NADH-ubiquinone oxidoreductase chain 1 (318 aa).

Helical transmembrane passes span 2 to 22 (FMIN…FLTL), 70 to 90 (MFIL…IPLP), 100 to 120 (LGVL…LWSG), 147 to 167 (AIIL…TLII), 172 to 192 (MWLI…TLAE), 222 to 242 (LFFM…AILF), 253 to 273 (ELYT…FLWI), and 294 to 314 (LPLT…TSGI).

This sequence belongs to the complex I subunit 1 family. Core subunit of respiratory chain NADH dehydrogenase (Complex I) which is composed of 45 different subunits.

The protein localises to the mitochondrion inner membrane. The catalysed reaction is a ubiquinone + NADH + 5 H(+)(in) = a ubiquinol + NAD(+) + 4 H(+)(out). In terms of biological role, core subunit of the mitochondrial membrane respiratory chain NADH dehydrogenase (Complex I) which catalyzes electron transfer from NADH through the respiratory chain, using ubiquinone as an electron acceptor. Essential for the catalytic activity and assembly of complex I. The protein is NADH-ubiquinone oxidoreductase chain 1 (MT-ND1) of Bos indicus (Zebu).